We begin with the raw amino-acid sequence, 158 residues long: UPAR/Ly6 domain-containing protein crim (158 aa).

The first 22 residues, 1-22, serve as a signal peptide directing secretion; it reads MHYHTNLIAALLLAALIHEGSA. Residues 23–136 are Extracellular-facing; sequence IWCYRCTSAT…FCFLDHRCNG (114 aa). Asn-107 carries an N-linked (GlcNAc...) asparagine glycan. Asn-135 is lipidated: GPI-anchor amidated asparagine. Positions 136-158 are cleaved as a propeptide — removed in mature form; it reads GASGLQTSAVIGLLTLIPALLLR. The chain crosses the membrane as a helical span at residues 137–157; it reads ASGLQTSAVIGLLTLIPALLL. Position 158 (Arg-158) is a topological domain, cytoplasmic.

It belongs to the quiver family.

The protein resides in the membrane. In terms of biological role, required for septate junction assembly possibly by organizing the preassembly and transport of septate junction proteins. Involved in epithelial cell septate junction-mediated paracellular barrier functions of trachea, hindgut and salivary gland. The protein is UPAR/Ly6 domain-containing protein crim of Drosophila melanogaster (Fruit fly).